The chain runs to 253 residues: Ice-binding protein (253 aa).

The N-terminal stretch at 1–27 (MKTLISNSKKVLIPLIMGSIFAGNVMA) is a signal peptide. C75 and C93 are joined by a disulfide. 2 consecutive short sequence motifs (ice-binding site motif (T-A/G-X-T/N)) follow at residues 220 to 223 (TGTT) and 232 to 235 (TAVT).

Belongs to the ice-binding protein family.

It localises to the secreted. Its function is as follows. Binds to the surface of ice crystals and inhibits their growth. Has ice recrystallization inhibition (RI) activity (the ability to prevent the formation of larger grains of ice at the expense of smaller grains), which may protect membranes from freezing injury. Has high thermal hysteresis (TH) activity, which is the ability to lower the freezing point of an aqueous solution below its melting point, and thus the freezing of the cell fluid can be prevented protecting the organism from ice damage. The TH activity of this protein is 3.8 degrees Celsius at 14 mM. The sequence is that of Ice-binding protein from Colwellia sp.